The sequence spans 206 residues: Synaptosomal-associated protein 25 (206 aa).

Residues 1–20 are compositionally biased toward basic and acidic residues; that stretch reads MAEDADMRNELEEMQRRADQ. The tract at residues 1 to 23 is disordered; sequence MAEDADMRNELEEMQRRADQLAD. The t-SNARE coiled-coil homology 1 domain maps to 19–81; it reads DQLADESLES…KEAEKNLTDL (63 aa). Residues Cys85, Cys88, Cys90, and Cys92 are each lipidated (S-palmitoyl cysteine). The residue at position 138 (Thr138) is a Phosphothreonine. The t-SNARE coiled-coil homology 2 domain occupies 140–202; sequence DARENEMDEN…DEANQRATKM (63 aa). Ser187 carries the post-translational modification Phosphoserine.

It belongs to the SNAP-25 family. Part of the SNARE core complex containing SNAP25, VAMP2 and STX1A. This complex binds CPLX1. Interacts with TRIM9, RIMS1 and SNAPIN. Binds STXBP6. Found in a ternary complex with STX1A and VAMP8. Associates with the BLOC-1 complex. Isoform 1 and isoform 2 interact with BLOC1S6. Interacts with alpha-synuclein/SNCA. In terms of processing, palmitoylated. Cys-85 appears to be the main site, and palmitoylation is required for membrane association.

It is found in the membrane. It localises to the synapse. The protein localises to the synaptosome. The protein resides in the cell membrane. Functionally, t-SNARE involved in the molecular regulation of neurotransmitter release. May play an important role in the synaptic function of specific neuronal systems. Associates with proteins involved in vesicle docking and membrane fusion. The protein is Synaptosomal-associated protein 25 (SNAP25) of Gallus gallus (Chicken).